A 359-amino-acid polypeptide reads, in one-letter code: Peptide chain release factor 1 (359 aa).

N5-methylglutamine is present on Gln236. A disordered region spans residues 286–305; the sequence is KKEMERSTMRKSQIGSGDRS.

It belongs to the prokaryotic/mitochondrial release factor family. Post-translationally, methylated by PrmC. Methylation increases the termination efficiency of RF1.

The protein resides in the cytoplasm. In terms of biological role, peptide chain release factor 1 directs the termination of translation in response to the peptide chain termination codons UAG and UAA. The protein is Peptide chain release factor 1 of Wolbachia pipientis wMel.